We begin with the raw amino-acid sequence, 626 residues long: Protein ALEX (626 aa).

Disordered regions lie at residues 1–29 (MMARPVDPQRSPDPTFRSSTRHSGKLEPM), 173–223 (TTAH…AAHP), 236–473 (AAPG…APRS), and 556–612 (AASV…NNSR). Composition is skewed to polar residues over residues 186 to 195 (KSTAAASSRQ) and 255 to 270 (GSTTLPSTWTAPQSRL). Positions 281–312 (QIRESEQRDPQLRRKQQRWKEPLMPRREEKYP) are enriched in basic and acidic residues. A compositionally biased stretch (low complexity) spans 337-346 (QPILTPGQPQ). A compositionally biased stretch (pro residues) spans 366–399 (IPTPGQPLPPQPIPTPGRPLTPQPIPTPGRPLTP). Residues 416-435 (RLLRPGQPMSPQLRQTQGLP) are compositionally biased toward low complexity. The segment covering 436-445 (LPQPLLPPGQ) has biased composition (pro residues). A compositionally biased stretch (basic residues) spans 570 to 579 (ALSRSRRYPW). The segment covering 600 to 611 (RRNAVSSSTNNS) has biased composition (polar residues).

Belongs to the ALEX family. In terms of assembly, interacts with the N-terminal region of the XLas isoforms of guanine nucleotide-binding protein G(s) subunit alpha.

It localises to the cell membrane. It is found in the cell projection. Its subcellular location is the ruffle. In terms of biological role, may inhibit the adenylyl cyclase-stimulating activity of guanine nucleotide-binding protein G(s) subunit alpha which is produced from the same locus in a different open reading frame. The polypeptide is Protein ALEX (Homo sapiens (Human)).